The following is a 436-amino-acid chain: UDP-glucuronate 4-epimerase 5 (436 aa).

A run of 2 helical transmembrane segments spans residues 36 to 56 (LTLW…LSPP) and 95 to 115 (GLTV…SIAL). NAD(+) is bound at residue 97 to 128 (TVLVTGASGFVGTHVSIALRRRGDGVLGLDNF). Tyrosine 247 (proton acceptor) is an active-site residue.

The protein belongs to the NAD(P)-dependent epimerase/dehydratase family. As to quaternary structure, homodimer. As to expression, in leaves, pollen and siliques, but not in roots or flowers.

The protein localises to the golgi apparatus. Its subcellular location is the golgi stack membrane. The catalysed reaction is UDP-alpha-D-glucuronate = UDP-alpha-D-galacturonate. Its function is as follows. Involved in the synthesis of the negatively charged monosaccharide that forms the backbone of pectic cell wall components. The chain is UDP-glucuronate 4-epimerase 5 (GAE5) from Arabidopsis thaliana (Mouse-ear cress).